The following is a 175-amino-acid chain: NADH-quinone oxidoreductase subunit I (175 aa).

2 consecutive 4Fe-4S ferredoxin-type domains span residues Lys69 to Ala98 and Lys115 to Pro144. Residues Cys78, Cys81, Cys84, Cys88, Cys124, Cys127, Cys130, and Cys134 each contribute to the [4Fe-4S] cluster site.

It belongs to the complex I 23 kDa subunit family. In terms of assembly, NDH-1 is composed of 14 different subunits. Subunits NuoA, H, J, K, L, M, N constitute the membrane sector of the complex. The cofactor is [4Fe-4S] cluster.

It is found in the cell inner membrane. The enzyme catalyses a quinone + NADH + 5 H(+)(in) = a quinol + NAD(+) + 4 H(+)(out). Its function is as follows. NDH-1 shuttles electrons from NADH, via FMN and iron-sulfur (Fe-S) centers, to quinones in the respiratory chain. The immediate electron acceptor for the enzyme in this species is believed to be ubiquinone. Couples the redox reaction to proton translocation (for every two electrons transferred, four hydrogen ions are translocated across the cytoplasmic membrane), and thus conserves the redox energy in a proton gradient. This is NADH-quinone oxidoreductase subunit I from Leptospira interrogans serogroup Icterohaemorrhagiae serovar Lai (strain 56601).